Reading from the N-terminus, the 171-residue chain is Squamosa promoter-binding protein 2 (171 aa).

Disordered regions lie at residues 20–46 (GDEG…VVKV) and 57–76 (KLNL…TASG). The segment covering 22 to 40 (EGSDFEEEEEGEDEEEEEQ) has biased composition (acidic residues). The SBP-type zinc-finger motif lies at 82–159 (QPCCLVENCG…AGHNERRRKS (78 aa)). 8 residues coordinate Zn(2+): C85, C90, C107, H110, C126, C129, H133, and C145. A Bipartite nuclear localization signal motif is present at residues 142-158 (KRSCRRRLAGHNERRRK). The segment covering 149–158 (LAGHNERRRK) has biased composition (basic residues). The disordered stretch occupies residues 149-171 (LAGHNERRRKSSLESHKEGRSPR). The span at 159-171 (SSLESHKEGRSPR) shows a compositional bias: basic and acidic residues.

It is found in the nucleus. Functionally, probable transcriptional factor. Binds to the promoter of the SQUAMOSA gene. This chain is Squamosa promoter-binding protein 2 (SBP2), found in Antirrhinum majus (Garden snapdragon).